Consider the following 190-residue polypeptide: NADH dehydrogenase [ubiquinone] iron-sulfur protein 3 (190 aa).

The protein belongs to the complex I 30 kDa subunit family. As to quaternary structure, complex I is composed of about 45 different subunits. This is a component of the iron-sulfur (IP) fragment of the enzyme.

It localises to the mitochondrion inner membrane. It carries out the reaction a ubiquinone + NADH + 5 H(+)(in) = a ubiquinol + NAD(+) + 4 H(+)(out). Core subunit of the mitochondrial membrane respiratory chain NADH dehydrogenase (Complex I) that is believed to belong to the minimal assembly required for catalysis. Complex I functions in the transfer of electrons from NADH to the respiratory chain. The immediate electron acceptor for the enzyme is believed to be ubiquinone. The protein is NADH dehydrogenase [ubiquinone] iron-sulfur protein 3 (NAD9) of Solanum tuberosum (Potato).